Reading from the N-terminus, the 287-residue chain is 4-diphosphocytidyl-2-C-methyl-D-erythritol kinase (287 aa).

Lys-12 is an active-site residue. Residue 95-105 (PAQAGMGGGSS) coordinates ATP. Residue Asp-137 is part of the active site.

This sequence belongs to the GHMP kinase family. IspE subfamily.

It carries out the reaction 4-CDP-2-C-methyl-D-erythritol + ATP = 4-CDP-2-C-methyl-D-erythritol 2-phosphate + ADP + H(+). The protein operates within isoprenoid biosynthesis; isopentenyl diphosphate biosynthesis via DXP pathway; isopentenyl diphosphate from 1-deoxy-D-xylulose 5-phosphate: step 3/6. Functionally, catalyzes the phosphorylation of the position 2 hydroxy group of 4-diphosphocytidyl-2C-methyl-D-erythritol. In Delftia acidovorans (strain DSM 14801 / SPH-1), this protein is 4-diphosphocytidyl-2-C-methyl-D-erythritol kinase.